The following is a 125-amino-acid chain: Phosphoribosyl-AMP cyclohydrolase (125 aa).

A Mg(2+)-binding site is contributed by Asp-74. Residue Cys-75 coordinates Zn(2+). 2 residues coordinate Mg(2+): Asp-76 and Asp-78. The Zn(2+) site is built by Cys-92 and Cys-99.

This sequence belongs to the PRA-CH family. Homodimer. Mg(2+) serves as cofactor. Zn(2+) is required as a cofactor.

The protein resides in the cytoplasm. It catalyses the reaction 1-(5-phospho-beta-D-ribosyl)-5'-AMP + H2O = 1-(5-phospho-beta-D-ribosyl)-5-[(5-phospho-beta-D-ribosylamino)methylideneamino]imidazole-4-carboxamide. It functions in the pathway amino-acid biosynthesis; L-histidine biosynthesis; L-histidine from 5-phospho-alpha-D-ribose 1-diphosphate: step 3/9. Functionally, catalyzes the hydrolysis of the adenine ring of phosphoribosyl-AMP. The chain is Phosphoribosyl-AMP cyclohydrolase from Geobacter sulfurreducens (strain ATCC 51573 / DSM 12127 / PCA).